Here is a 153-residue protein sequence, read N- to C-terminus: NADH dehydrogenase [ubiquinone] 1 beta subcomplex subunit 11, mitochondrial (153 aa).

Residues 1-29 (MAAGLFGLSARRLLAAAATRGLPAARVRW) constitute a mitochondrion transit peptide. The interval 49–72 (PEPTTQWQEDLDPEDENLYEKNPD) is disordered. Residues 89 to 109 (LVFFFGVSIILVLGSTFVAYL) traverse the membrane as a helical segment.

This sequence belongs to the complex I NDUFB11 subunit family. As to quaternary structure, complex I is composed of 45 different subunits. Interacts with BCAP31.

The protein localises to the mitochondrion inner membrane. Functionally, accessory subunit of the mitochondrial membrane respiratory chain NADH dehydrogenase (Complex I), that is believed not to be involved in catalysis. Complex I functions in the transfer of electrons from NADH to the respiratory chain. The immediate electron acceptor for the enzyme is believed to be ubiquinone. In Pongo pygmaeus (Bornean orangutan), this protein is NADH dehydrogenase [ubiquinone] 1 beta subcomplex subunit 11, mitochondrial (NDUFB11).